Reading from the N-terminus, the 454-residue chain is Cathepsin C (454 aa).

The N-terminal stretch at 1–20 (MHWVFHCILIILACLRFTCA) is a signal peptide. Residues 21–217 (DTPANCTYED…SKELISLTGN (197 aa)) constitute a propeptide that is removed on maturation. Asparagine 25 is a glycosylation site (N-linked (GlcNAc...) asparagine). 3 disulfides stabilise this stretch: cysteine 26/cysteine 107, cysteine 244/cysteine 287, and cysteine 280/cysteine 321. Cysteine 247 is a catalytic residue. A glycan (N-linked (GlcNAc...) asparagine) is linked at asparagine 265. Phenylalanine 291 lines the chloride pocket. Residue asparagine 326 is glycosylated (N-linked (GlcNAc...) asparagine). Position 337 (tyrosine 337) interacts with chloride. Active-site residues include histidine 398 and asparagine 420.

The protein belongs to the peptidase C1 family. Chloride is required as a cofactor.

It localises to the lysosome. Functionally, thiol protease. Has a role as a digestive enzyme. The chain is Cathepsin C from Schistosoma mansoni (Blood fluke).